Reading from the N-terminus, the 282-residue chain is Acetyl-coenzyme A carboxylase carboxyl transferase subunit beta (282 aa).

Positions 29–282 constitute a CoA carboxyltransferase N-terminal domain; that stretch reads LPINCPSCSA…LSSLLGLHQG (254 aa). Cys-33, Cys-36, Cys-52, and Cys-55 together coordinate Zn(2+). The segment at 33–55 adopts a C4-type zinc-finger fold; the sequence is CPSCSARIAAEALQRNLKVCPKC.

Belongs to the AccD/PCCB family. Acetyl-CoA carboxylase is a heterohexamer composed of biotin carboxyl carrier protein (AccB), biotin carboxylase (AccC) and two subunits each of ACCase subunit alpha (AccA) and ACCase subunit beta (AccD). Zn(2+) serves as cofactor.

The protein resides in the cytoplasm. It carries out the reaction N(6)-carboxybiotinyl-L-lysyl-[protein] + acetyl-CoA = N(6)-biotinyl-L-lysyl-[protein] + malonyl-CoA. Its pathway is lipid metabolism; malonyl-CoA biosynthesis; malonyl-CoA from acetyl-CoA: step 1/1. Its function is as follows. Component of the acetyl coenzyme A carboxylase (ACC) complex. Biotin carboxylase (BC) catalyzes the carboxylation of biotin on its carrier protein (BCCP) and then the CO(2) group is transferred by the transcarboxylase to acetyl-CoA to form malonyl-CoA. The protein is Acetyl-coenzyme A carboxylase carboxyl transferase subunit beta of Syntrophomonas wolfei subsp. wolfei (strain DSM 2245B / Goettingen).